We begin with the raw amino-acid sequence, 1142 residues long: Probable serine/threonine-protein kinase fhkB (1142 aa).

A compositionally biased stretch (polar residues) spans 1–16; that stretch reads MSQDIQTQNSYSDELY. Disordered stretches follow at residues 1-359, 374-404, and 432-451; these read MSQD…RLSQ, NTHT…KKQQ, and QIIG…QPPV. Composition is skewed to low complexity over residues 17-72 and 83-157; these read SSQI…FSQN and QNSY…PSSQ. The span at 158 to 178 shows a compositional bias: polar residues; the sequence is KRFFQSQNDDFVPSSQVTSLQ. Positions 186-302 form a coiled coil; the sequence is IQQQQQQQQQ…DYEQENDDDD (117 aa). Over residues 187-260 the composition is skewed to low complexity; sequence QQQQQQQQQQ…QQTQQQQQQP (74 aa). Composition is skewed to acidic residues over residues 261–277 and 283–325; these read QEDD…DNYE and EGEE…EEES. Residues 333–348 show a composition bias toward low complexity; it reads RALQSRSSQSRPLLRS. The segment covering 374 to 397 has biased composition (polar residues); the sequence is NTHTNQLGQSSQQTNSPNVHFNSL. Residues 393–434 are a coiled coil; it reads HFNSLQQKKKQQQQQQQQQQQQQQQQQQQQQQQQQQQSQQII. Over residues 432–443 the composition is skewed to low complexity; sequence QIIGSQSSQSSQ. Residues 480-551 enclose the FHA domain; sequence IVVGRSSSCD…NGSYINGELI (72 aa). Positions 625-885 constitute a Protein kinase domain; that stretch reads YYFVKEIGSG…IKEALNHPWF (261 aa). ATP-binding positions include 631 to 639 and K654; that span reads IGSGGYGIV. The active-site Proton acceptor is D747. The interval 947–1142 is disordered; it reads FDNNNNNNNN…HQQYTQHTTM (196 aa). Residues 949–1034 show a composition bias toward low complexity; that stretch reads NNNNNNNNNN…HNHNLNNHNH (86 aa). Positions 1035-1067 are enriched in basic residues; it reads NNNHHHNHNHNHNHNHNHNHNHNHNHNHNHNHN. A compositionally biased stretch (low complexity) spans 1068 to 1133; it reads NHNNNNNNNN…NNINNNNNYH (66 aa). The stretch at 1090–1132 forms a coiled coil; that stretch reads NNNNNNNNNNNNNNNNNNNNYYNNNINNINNNINNNINNNNNY.

The protein belongs to the protein kinase superfamily. CAMK Ser/Thr protein kinase family. CHK2 subfamily.

The enzyme catalyses L-seryl-[protein] + ATP = O-phospho-L-seryl-[protein] + ADP + H(+). It carries out the reaction L-threonyl-[protein] + ATP = O-phospho-L-threonyl-[protein] + ADP + H(+). This chain is Probable serine/threonine-protein kinase fhkB (fhkB), found in Dictyostelium discoideum (Social amoeba).